The sequence spans 51 residues: Protein Tat (51 aa).

The span at 1–25 shows a compositional bias: polar residues; it reads EAETATKSCSGRQANQVSLPKQPAS. The interval 1 to 51 is disordered; that stretch reads EAETATKSCSGRQANQVSLPKQPASQPRGDPTGPKESKKKVETETETDPVN. Lys21 participates in a covalent cross-link: Glycyl lysine isopeptide (Lys-Gly) (interchain with G-Cter in ubiquitin). The Cell attachment site motif lies at 28–30; the sequence is RGD. A compositionally biased stretch (basic and acidic residues) spans 33–43; the sequence is GPKESKKKVET.

This sequence belongs to the lentiviruses Tat family. Interacts with host CCNT1. Associates with the P-TEFb complex composed at least of Tat, P-TEFb (CDK9 and CCNT1), TAR RNA, RNA Pol II. Recruits the HATs CREBBP, TAF1/TFIID, EP300, PCAF and GCN5L2. Interacts with host KAT5/Tip60; this interaction targets the latter to degradation. Interacts with the host deacetylase SIRT1. Interacts with host capping enzyme RNGTT; this interaction stimulates RNGTT. Binds to host KDR, and to the host integrins ITGAV/ITGB3 and ITGA5/ITGB1. Interacts with host KPNB1/importin beta-1 without previous binding to KPNA1/importin alpha-1. Interacts with EIF2AK2. Interacts with host nucleosome assembly protein NAP1L1; this interaction may be required for the transport of Tat within the nucleus, since the two proteins interact at the nuclear rim. Interacts with host C1QBP/SF2P32; this interaction involves lysine-acetylated Tat. Interacts with the host chemokine receptors CCR2, CCR3 and CXCR4. Interacts with host DPP4/CD26; this interaction may trigger an anti-proliferative effect. Interacts with host LDLR. Interacts with the host extracellular matrix metalloproteinase MMP1. Interacts with host PRMT6; this interaction mediates Tat's methylation. Interacts with, and is ubiquitinated by MDM2/Hdm2. Interacts with host PSMC3 and HTATIP2. Interacts with STAB1; this interaction may overcome SATB1-mediated repression of IL2 and IL2RA (interleukin) in T cells by binding to the same domain than HDAC1. Interacts (when acetylated) with human CDK13, thereby increasing HIV-1 mRNA splicing and promoting the production of the doubly spliced HIV-1 protein Nef. In terms of processing, acetylation by EP300, CREBBP, GCN5L2/GCN5 and PCAF regulates the transactivation activity of Tat. Phosphorylated by EIF2AK2 on serine and threonine residues adjacent to the basic region important for TAR RNA binding and function. Phosphorylation of Tat by EIF2AK2 is dependent on the prior activation of EIF2AK2 by dsRNA. Post-translationally, asymmetrical arginine methylation by host PRMT6 seems to diminish the transactivation capacity of Tat and affects the interaction with host CCNT1. In terms of processing, polyubiquitination by MDM2 does not target Tat to degradation, but activates its transactivation function and fosters interaction with CCNT1 and TAR RNA.

The protein localises to the host nucleus. Its subcellular location is the host nucleolus. The protein resides in the host cytoplasm. It is found in the secreted. Transcriptional activator that increases RNA Pol II processivity, thereby increasing the level of full-length viral transcripts. Recognizes a hairpin structure at the 5'-LTR of the nascent viral mRNAs referred to as the transactivation responsive RNA element (TAR) and recruits the cyclin T1-CDK9 complex (P-TEFb complex) that will in turn hyperphosphorylate the RNA polymerase II to allow efficient elongation. The CDK9 component of P-TEFb and other Tat-activated kinases hyperphosphorylate the C-terminus of RNA Pol II that becomes stabilized and much more processive. Other factors such as HTATSF1/Tat-SF1, SUPT5H/SPT5, and HTATIP2 are also important for Tat's function. Besides its effect on RNA Pol II processivity, Tat induces chromatin remodeling of proviral genes by recruiting the histone acetyltransferases (HATs) CREBBP, EP300 and PCAF to the chromatin. This also contributes to the increase in proviral transcription rate, especially when the provirus integrates in transcriptionally silent region of the host genome. To ensure maximal activation of the LTR, Tat mediates nuclear translocation of NF-kappa-B by interacting with host RELA. Through its interaction with host TBP, Tat may also modulate transcription initiation. Tat can reactivate a latently infected cell by penetrating in it and transactivating its LTR promoter. In the cytoplasm, Tat is thought to act as a translational activator of HIV-1 mRNAs. In terms of biological role, extracellular circulating Tat can be endocytosed by surrounding uninfected cells via the binding to several surface receptors such as CD26, CXCR4, heparan sulfate proteoglycans (HSPG) or LDLR. Neurons are rarely infected, but they internalize Tat via their LDLR. Endosomal low pH allows Tat to cross the endosome membrane to enter the cytosol and eventually further translocate into the nucleus, thereby inducing severe cell dysfunctions ranging from cell activation to cell death. Through its interaction with nuclear HATs, Tat is potentially able to control the acetylation-dependent cellular gene expression. Tat seems to inhibit the HAT activity of KAT5/Tip60 and TAF1, and consequently modify the expression of specific cellular genes. Modulates the expression of many cellular genes involved in cell survival, proliferation or in coding for cytokines (such as IL10) or cytokine receptors. May be involved in the derepression of host interleukin IL2 expression. Mediates the activation of cyclin-dependent kinases and dysregulation of microtubule network. Tat plays a role in T-cell and neurons apoptosis. Tat induced neurotoxicity and apoptosis probably contribute to neuroAIDS. Host extracellular matrix metalloproteinase MMP1 cleaves Tat and decreases Tat's mediated neurotoxicity. Circulating Tat also acts as a chemokine-like and/or growth factor-like molecule that binds to specific receptors on the surface of the cells, affecting many cellular pathways. In the vascular system, Tat binds to ITGAV/ITGB3 and ITGA5/ITGB1 integrins dimers at the surface of endothelial cells and competes with bFGF for heparin-binding sites, leading to an excess of soluble bFGF. Binds to KDR/VEGFR-2. All these Tat-mediated effects enhance angiogenesis in Kaposi's sarcoma lesions. The sequence is that of Protein Tat from Homo sapiens (Human).